Reading from the N-terminus, the 508-residue chain is Aspartic proteinase yapsin-3 (508 aa).

A signal peptide spans 1 to 20 (MKLQLAAVATLAVLTSPAFG). Residues 21–47 (RVLPDGKYVKIPFTKKKNGDNGELSKR) constitute a propeptide that is removed on maturation. The Peptidase A1 domain maps to 63–394 (YSVELAIGTP…DLDNYEISLA (332 aa)). The N-linked (GlcNAc...) asparagine glycan is linked to asparagine 75. Aspartate 81 is an active-site residue. 4 N-linked (GlcNAc...) asparagine glycosylation sites follow: asparagine 120, asparagine 160, asparagine 163, and asparagine 275. Aspartate 288 is an active-site residue. 6 N-linked (GlcNAc...) asparagine glycosylation sites follow: asparagine 309, asparagine 328, asparagine 367, asparagine 422, asparagine 445, and asparagine 462. Residues 448 to 468 (STATTTRSTTTKKTNSTTTAK) show a composition bias toward low complexity. The tract at residues 448–476 (STATTTRSTTTKKTNSTTTAKSTHKSKRA) is disordered. Residue asparagine 483 is the site of GPI-anchor amidated asparagine attachment. A propeptide spans 484-508 (SASSIRSTLGLLLVPSLLILSVFFS) (removed in mature form).

This sequence belongs to the peptidase A1 family. Post-translationally, can also be processed to start at Phe-54.

It localises to the cell membrane. Cleaves proteins C-terminally to mono- and paired-basic residues. Required for cell wall integrity. The protein is Aspartic proteinase yapsin-3 (YPS3) of Saccharomyces cerevisiae (strain ATCC 204508 / S288c) (Baker's yeast).